Consider the following 422-residue polypeptide: L-threonine dehydratase biosynthetic IlvA (422 aa).

N6-(pyridoxal phosphate)lysine is present on lysine 56. Residues asparagine 83, 189–193 (GGGGL), and serine 315 contribute to the pyridoxal 5'-phosphate site. In terms of domain architecture, ACT-like spans 339 to 413 (HYFILNFPQR…FDPSNIYINE (75 aa)).

The protein belongs to the serine/threonine dehydratase family. Homotetramer. It depends on pyridoxal 5'-phosphate as a cofactor.

It carries out the reaction L-threonine = 2-oxobutanoate + NH4(+). It participates in amino-acid biosynthesis; L-isoleucine biosynthesis; 2-oxobutanoate from L-threonine: step 1/1. Functionally, catalyzes the anaerobic formation of alpha-ketobutyrate and ammonia from threonine in a two-step reaction. The first step involved a dehydration of threonine and a production of enamine intermediates (aminocrotonate), which tautomerizes to its imine form (iminobutyrate). Both intermediates are unstable and short-lived. The second step is the nonenzymatic hydrolysis of the enamine/imine intermediates to form 2-ketobutyrate and free ammonia. In the low water environment of the cell, the second step is accelerated by RidA. This Staphylococcus aureus (strain Mu50 / ATCC 700699) protein is L-threonine dehydratase biosynthetic IlvA (ilvA).